A 175-amino-acid polypeptide reads, in one-letter code: Large ribosomal subunit protein uL10 (175 aa).

Belongs to the universal ribosomal protein uL10 family. As to quaternary structure, part of the ribosomal stalk of the 50S ribosomal subunit. The N-terminus interacts with L11 and the large rRNA to form the base of the stalk. The C-terminus forms an elongated spine to which L12 dimers bind in a sequential fashion forming a multimeric L10(L12)X complex.

Functionally, forms part of the ribosomal stalk, playing a central role in the interaction of the ribosome with GTP-bound translation factors. The protein is Large ribosomal subunit protein uL10 of Methylobacterium sp. (strain 4-46).